We begin with the raw amino-acid sequence, 801 residues long: Na(+)/H(+) antiporter subunit A (801 aa).

A run of 21 helical transmembrane segments spans residues 4 to 21 (LHLA…IPFL), 28 to 50 (VHTG…PMIR), 80 to 102 (GLLF…IFYL), 109 to 128 (LGPF…GVVL), 132 to 154 (VMVL…GYWY), 166 to 188 (SLLI…YLIT), 203 to 222 (IAGH…GAFT), 229 to 251 (FYIW…HSAT), 266 to 288 (IFAF…MVWG), 301 to 323 (ILAF…SAAA), 338 to 360 (AAIF…VGII), 372 to 394 (LGGL…FSMA), 428 to 450 (VLFP…KLLF), 471 to 493 (VGML…FPNI), 526 to 548 (GVTT…YLSL), 594 to 616 (YLLY…KGGF), 626 to 647 (IGVY…TVFA), 654 to 671 (IIAL…FVIF), 676 to 698 (LALT…FYHL), 710 to 732 (FRMT…GIAS), and 772 to 789 (MFEI…YSMI).

It belongs to the CPA3 antiporters (TC 2.A.63) subunit A family. Forms a heterooligomeric complex that consists of seven subunits: MrpA, MrpB, MrpC, MrpD, MrpE, MrpF and MrpG.

The protein localises to the cell membrane. Functionally, mrp complex is a Na(+)/H(+) antiporter that is considered to be the major Na(+) excretion system in B.subtilis. Has a major role in Na(+) resistance and a minor role in Na(+)- and K(+)-dependent pH homeostasis as compared to TetB. MrpA may be the actual Na(+)/H(+) antiporter, although the six other Mrp proteins are all required for Na(+)/H(+) antiport activity and Na(+) resistance. MrpA is required for initiation of sporulation when external Na(+) concentration increases. Also transports Li(+) but not K(+), Ca(2+) or Mg(2+). The sequence is that of Na(+)/H(+) antiporter subunit A (mrpA) from Bacillus subtilis (strain 168).